The primary structure comprises 278 residues: Undecaprenyl-diphosphatase (278 aa).

Transmembrane regions (helical) follow at residues 3 to 23 (YILI…IPIS), 42 to 62 (VAYS…IIYF), 88 to 108 (FLVI…LFVI), 112 to 132 (ILGL…IIIY), 152 to 172 (IIIV…RSGI), 190 to 210 (LSFI…VLFS), 225 to 245 (GLLI…NALL), and 253 to 273 (VVVL…LSGI).

Belongs to the UppP family.

It is found in the cell membrane. It carries out the reaction di-trans,octa-cis-undecaprenyl diphosphate + H2O = di-trans,octa-cis-undecaprenyl phosphate + phosphate + H(+). Catalyzes the dephosphorylation of undecaprenyl diphosphate (UPP). In Saccharolobus islandicus (strain M.16.4 / Kamchatka #3) (Sulfolobus islandicus), this protein is Undecaprenyl-diphosphatase.